The following is a 315-amino-acid chain: tRNA wybutosine-synthesizing protein 5 (315 aa).

One can recognise a JmjC domain in the interval 102 to 267 (DEKYYLRSLG…YDTTDTYGNK (166 aa)). Tyr106 serves as a coordination point for 2-oxoglutarate. Fe cation contacts are provided by His160 and Asp162. Residues Asn166 and Lys175 each contribute to the 2-oxoglutarate site. His235 provides a ligand contact to Fe cation.

This sequence belongs to the TYW5 family. Homodimer. Fe(2+) is required as a cofactor.

The catalysed reaction is 7-[(3S)-3-amino-3-carboxypropyl]wyosine(37) in tRNA(Phe) + 2-oxoglutarate + O2 = 7-(2-hydroxy-3-amino-3-carboxypropyl)wyosine(37) in tRNA(Phe) + succinate + CO2. The protein operates within tRNA modification; wybutosine-tRNA(Phe) biosynthesis. TRNA hydroxylase that acts as a component of the wybutosine biosynthesis pathway. Wybutosine is a hyper modified guanosine with a tricyclic base found at the 3'-position adjacent to the anticodon of eukaryotic phenylalanine tRNA. Catalyzes the hydroxylation of 7-(a-amino-a-carboxypropyl)wyosine (yW-72) into undermodified hydroxywybutosine (OHyW*). OHyW* being further transformed into hydroxywybutosine (OHyW) by LCMT2/TYW4. OHyW is a derivative of wybutosine found in higher eukaryotes. The sequence is that of tRNA wybutosine-synthesizing protein 5 (Tyw5) from Mus musculus (Mouse).